We begin with the raw amino-acid sequence, 130 residues long: Small ribosomal subunit protein uS11 (130 aa).

This sequence belongs to the universal ribosomal protein uS11 family. As to quaternary structure, part of the 30S ribosomal subunit. Interacts with proteins S7 and S18. Binds to IF-3.

In terms of biological role, located on the platform of the 30S subunit, it bridges several disparate RNA helices of the 16S rRNA. Forms part of the Shine-Dalgarno cleft in the 70S ribosome. In Caldicellulosiruptor bescii (strain ATCC BAA-1888 / DSM 6725 / KCTC 15123 / Z-1320) (Anaerocellum thermophilum), this protein is Small ribosomal subunit protein uS11.